The sequence spans 1512 residues: ATP-dependent permease YOR1 (1512 aa).

A disordered region spans residues 1–68 (MSPLLPTHWG…KGMKETEDGG (68 aa)). Over residues 13 to 29 (APQNEPTLPSPSHSVST) the composition is skewed to polar residues. The span at 31–65 (VGDEEKLRRSEGSDGEDRINLDSNKYDVKGMKETE) shows a compositional bias: basic and acidic residues. The next 5 membrane-spanning stretches (helical) occupy residues 229-249 (ASLA…AGFI), 288-308 (GPGI…SLGM), 363-385 (FAAG…IIIL), 475-495 (GMTA…FITY), and 507-527 (IFTV…WPMT). In terms of domain architecture, ABC transmembrane type-1 1 spans 246 to 533 (AGFIKVFGDT…WPMTLSSTAD (288 aa)). Residues 594-656 (VLNGGKPGGP…SAPGIDEEIS (63 aa)) are disordered. Residues 619 to 643 (AEEIQAETAAGQPGAGEASAEGQGQ) show a composition bias toward low complexity. The region spanning 651-871 (IDEEISEKKE…NGAFAKLIKE (221 aa)) is the ABC transporter 1 domain. Residue 683–690 (GAIGSGKS) participates in ATP binding. 4 consecutive transmembrane segments (helical) span residues 937 to 957 (GVFM…FYVI), 974 to 994 (NGFY…ALFF), 1067 to 1087 (VILL…VSLL), and 1167 to 1187 (FLGS…SSVS). Positions 943–1217 (LLFFCIVVAQ…LVRQIAEVEN (275 aa)) constitute an ABC transmembrane type-1 2 domain. The region spanning 1255 to 1496 (IEFKDVRMRY…GGIFTEMCSK (242 aa)) is the ABC transporter 2 domain. ATP is bound at residue 1289–1296 (GRTGAGKS).

The protein belongs to the ABC transporter superfamily. ABCC family. Conjugate transporter (TC 3.A.1.208) subfamily.

Its subcellular location is the extracellular vesicle membrane. The protein resides in the secreted. Its function is as follows. Transmembrane transporter. May play a role in the packaging or formation of extracellular vesicles (EVs), and in the export of virulence factors from EVs. Required for efficient non-lytic exocytosis from host macrophages, the process by which the yeast escapes host macrophages with both host cell and pathogen remaining viable. This is ATP-dependent permease YOR1 from Cryptococcus neoformans var. grubii serotype A (strain H99 / ATCC 208821 / CBS 10515 / FGSC 9487) (Filobasidiella neoformans var. grubii).